An 858-amino-acid polypeptide reads, in one-letter code: ATP-dependent DNA helicase Q-like SIM (858 aa).

The UBA domain maps to 2-44 (DLSSDQLVMKIVEMGFEKLDALEAVKAVGGKSCDDAVEYILKG). The Helicase ATP-binding domain maps to 177–353 (LSTWVAHKDC…LESLHLSKET (177 aa)). Position 190–197 (190–197 (AATGSGKS)) interacts with ATP. The short motif at 288-291 (DEAH) is the DEAH box element. The interval 402-450 (LAVISRESEEQTDFGSHDSENIHETDYDEDEEDQENSLAKKNSSNGKEL) is disordered. The span at 416–426 (GSHDSENIHET) shows a compositional bias: basic and acidic residues. Residues 427–436 (DYDEDEEDQE) are compositionally biased toward acidic residues. The span at 437–448 (NSLAKKNSSNGK) shows a compositional bias: polar residues. A Helicase C-terminal domain is found at 491–627 (EKQKDLEGLT…QTEQAYKMLS (137 aa)). Residues 822–858 (RQRLERRERKPRRERKPRKKRTRGRSSTKLHPWRSKE) are disordered. Positions 830 to 858 (RKPRRERKPRKKRTRGRSSTKLHPWRSKE) are enriched in basic residues.

The protein belongs to the helicase family. RecQ subfamily. The cofactor is Mg(2+). Requires Mn(2+) as cofactor. Mostly expressed in roots and seedlings, and, to a lower extent, in leaves, shoots, shoot apical mersitem, inflorescences, flowers, siliques and seeds.

The protein resides in the nucleus. It carries out the reaction Couples ATP hydrolysis with the unwinding of duplex DNA by translocating in the 3'-5' direction.. The enzyme catalyses ATP + H2O = ADP + phosphate + H(+). Plant specific, probable 3'-5' DNA helicase that may play a role in the repair of DNA. The protein is ATP-dependent DNA helicase Q-like SIM (RECQSIM) of Arabidopsis thaliana (Mouse-ear cress).